A 944-amino-acid chain; its full sequence is Translation initiation factor IF-2 (944 aa).

2 disordered regions span residues 50–91 (SAKT…FAGK) and 114–349 (KVEV…VPAT). Basic and acidic residues-rich tracts occupy residues 75 to 86 (ESAKKNKEDHPR), 124 to 157 (VVTE…ETKD), 164 to 185 (AEVK…EKKK), and 199 to 233 (KRAE…DNRR). Residues 267–280 (SSGSAPATDSFTPA) show a composition bias toward polar residues. A compositionally biased stretch (basic and acidic residues) spans 286-307 (SRRDRDRKKSDNNRDNTKDGNR). Composition is skewed to polar residues over residues 317–331 (NRNQ…NWNQ) and 338–348 (YQNNQSSSVPA). In terms of domain architecture, tr-type G spans 443 to 614 (ERPAVVTIMG…LLVAEVQELK (172 aa)). The tract at residues 452 to 459 (GHVDHGKT) is G1. 452–459 (GHVDHGKT) provides a ligand contact to GTP. A G2 region spans residues 477 to 481 (GITQH). The tract at residues 498 to 501 (DTPG) is G3. Residues 498–502 (DTPGH) and 552–555 (NKID) each bind GTP. The tract at residues 552–555 (NKID) is G4. The tract at residues 590 to 592 (SAK) is G5.

Belongs to the TRAFAC class translation factor GTPase superfamily. Classic translation factor GTPase family. IF-2 subfamily.

Its subcellular location is the cytoplasm. Functionally, one of the essential components for the initiation of protein synthesis. Protects formylmethionyl-tRNA from spontaneous hydrolysis and promotes its binding to the 30S ribosomal subunits. Also involved in the hydrolysis of GTP during the formation of the 70S ribosomal complex. The protein is Translation initiation factor IF-2 (infB) of Lactococcus lactis subsp. lactis (strain IL1403) (Streptococcus lactis).